A 400-amino-acid polypeptide reads, in one-letter code: Tyrosine--tRNA ligase (400 aa).

The 'HIGH' region signature appears at 42–51 (PTAPDLHLGH). The 'KMSKS' region motif lies at 226–230 (KMSKS). Lysine 229 lines the ATP pocket. In terms of domain architecture, S4 RNA-binding spans 339-399 (FSISYILRRA…GKKKIAQIFV (61 aa)).

The protein belongs to the class-I aminoacyl-tRNA synthetase family. TyrS type 2 subfamily. In terms of assembly, homodimer.

It is found in the cytoplasm. It catalyses the reaction tRNA(Tyr) + L-tyrosine + ATP = L-tyrosyl-tRNA(Tyr) + AMP + diphosphate + H(+). Catalyzes the attachment of tyrosine to tRNA(Tyr) in a two-step reaction: tyrosine is first activated by ATP to form Tyr-AMP and then transferred to the acceptor end of tRNA(Tyr). The chain is Tyrosine--tRNA ligase from Hahella chejuensis (strain KCTC 2396).